The chain runs to 159 residues: MKIRVGFGFDVHQLVEGRELWLGGIRLEHSKGLLGHSDADVLLHTVCDALLGAANMRDIGYHFPDTAGEYKNIDSKILLKKTVELIATKGYRVGNIDATICAERPKLKAHIPLMQETMAAVMGIDAEDISIKATTTEKLGFTGREEGISAYATVLIEKD.

A divalent metal cation-binding residues include D10 and H12. 4-CDP-2-C-methyl-D-erythritol 2-phosphate is bound by residues 10–12 (DVH) and 36–37 (HS). H44 lines the a divalent metal cation pocket. Residues 58–60 (DIG), 134–137 (TTTE), F141, and R144 contribute to the 4-CDP-2-C-methyl-D-erythritol 2-phosphate site.

It belongs to the IspF family. As to quaternary structure, homotrimer. The cofactor is a divalent metal cation.

It carries out the reaction 4-CDP-2-C-methyl-D-erythritol 2-phosphate = 2-C-methyl-D-erythritol 2,4-cyclic diphosphate + CMP. The protein operates within isoprenoid biosynthesis; isopentenyl diphosphate biosynthesis via DXP pathway; isopentenyl diphosphate from 1-deoxy-D-xylulose 5-phosphate: step 4/6. Involved in the biosynthesis of isopentenyl diphosphate (IPP) and dimethylallyl diphosphate (DMAPP), two major building blocks of isoprenoid compounds. Catalyzes the conversion of 4-diphosphocytidyl-2-C-methyl-D-erythritol 2-phosphate (CDP-ME2P) to 2-C-methyl-D-erythritol 2,4-cyclodiphosphate (ME-CPP) with a corresponding release of cytidine 5-monophosphate (CMP). The chain is 2-C-methyl-D-erythritol 2,4-cyclodiphosphate synthase from Bacteroides thetaiotaomicron (strain ATCC 29148 / DSM 2079 / JCM 5827 / CCUG 10774 / NCTC 10582 / VPI-5482 / E50).